Here is a 404-residue protein sequence, read N- to C-terminus: Cysteine desulfurase IscS (404 aa).

Residues 75–76 (AT), Asn155, Gln183, and 203–205 (SGH) contribute to the pyridoxal 5'-phosphate site. Lys206 is subject to N6-(pyridoxal phosphate)lysine. Position 243 (Thr243) interacts with pyridoxal 5'-phosphate. Cys328 acts as the Cysteine persulfide intermediate in catalysis. Cys328 contacts [2Fe-2S] cluster.

It belongs to the class-V pyridoxal-phosphate-dependent aminotransferase family. NifS/IscS subfamily. As to quaternary structure, homodimer. Forms a heterotetramer with IscU, interacts with other sulfur acceptors. The cofactor is pyridoxal 5'-phosphate.

It localises to the cytoplasm. It carries out the reaction (sulfur carrier)-H + L-cysteine = (sulfur carrier)-SH + L-alanine. The protein operates within cofactor biosynthesis; iron-sulfur cluster biosynthesis. Master enzyme that delivers sulfur to a number of partners involved in Fe-S cluster assembly, tRNA modification or cofactor biosynthesis. Catalyzes the removal of elemental sulfur atoms from cysteine to produce alanine. Functions as a sulfur delivery protein for Fe-S cluster synthesis onto IscU, an Fe-S scaffold assembly protein, as well as other S acceptor proteins. This chain is Cysteine desulfurase IscS, found in Shewanella pealeana (strain ATCC 700345 / ANG-SQ1).